A 295-amino-acid chain; its full sequence is Protoheme IX farnesyltransferase 2 (295 aa).

9 consecutive transmembrane segments (helical) span residues 9–29 (ITKP…FFLA), 36–56 (FALF…GCVF), 83–103 (LPLA…LLYV), 108–128 (LSAF…SLWL), 135–155 (GTLV…CAVS), 163–183 (VTLL…IAIF), 209–229 (IVLY…GGYA), 230–250 (GLGY…MAWG), and 264–284 (VFGF…VDSQ).

The protein belongs to the UbiA prenyltransferase family. Protoheme IX farnesyltransferase subfamily.

It is found in the cell inner membrane. The enzyme catalyses heme b + (2E,6E)-farnesyl diphosphate + H2O = Fe(II)-heme o + diphosphate. It participates in porphyrin-containing compound metabolism; heme O biosynthesis; heme O from protoheme: step 1/1. Its function is as follows. Converts heme B (protoheme IX) to heme O by substitution of the vinyl group on carbon 2 of heme B porphyrin ring with a hydroxyethyl farnesyl side group. This is Protoheme IX farnesyltransferase 2 from Pseudomonas putida (strain ATCC 47054 / DSM 6125 / CFBP 8728 / NCIMB 11950 / KT2440).